We begin with the raw amino-acid sequence, 425 residues long: tRNA(Ile)-lysidine synthase (425 aa).

An ATP-binding site is contributed by 27–32; that stretch reads SGGLDS.

Belongs to the tRNA(Ile)-lysidine synthase family.

The protein localises to the cytoplasm. The catalysed reaction is cytidine(34) in tRNA(Ile2) + L-lysine + ATP = lysidine(34) in tRNA(Ile2) + AMP + diphosphate + H(+). Its function is as follows. Ligates lysine onto the cytidine present at position 34 of the AUA codon-specific tRNA(Ile) that contains the anticodon CAU, in an ATP-dependent manner. Cytidine is converted to lysidine, thus changing the amino acid specificity of the tRNA from methionine to isoleucine. This chain is tRNA(Ile)-lysidine synthase, found in Streptococcus pneumoniae (strain P1031).